Consider the following 109-residue polypeptide: MSQRKPWEILIRPIITEKSNRLMEDYNKYTFEVALDASKPEIKEAVEKLFNVKVKKVNTMIVKPKKKRVWERFRQYGTTKKWKKAIVTLEKGINRHPWVCSEVRCRDGC.

The protein belongs to the universal ribosomal protein uL23 family. As to quaternary structure, part of the 50S ribosomal subunit. Contacts protein L29, and trigger factor when it is bound to the ribosome.

Its function is as follows. One of the early assembly proteins it binds 23S rRNA. One of the proteins that surrounds the polypeptide exit tunnel on the outside of the ribosome. Forms the main docking site for trigger factor binding to the ribosome. The polypeptide is Large ribosomal subunit protein uL23 (Aquifex pyrophilus).